The sequence spans 253 residues: REF/SRPP-like protein OsI_017815 (253 aa).

Residues 1–26 (MADSGSDAPISNRPEEEVTVEKTPEM) are disordered. The span at 13–26 (RPEEEVTVEKTPEM) shows a compositional bias: basic and acidic residues.

Belongs to the REF/SRPP family.

In Oryza sativa subsp. indica (Rice), this protein is REF/SRPP-like protein OsI_017815.